Reading from the N-terminus, the 338-residue chain is Aspartate carbamoyltransferase catalytic subunit (338 aa).

2 residues coordinate carbamoyl phosphate: Arg-72 and Thr-73. Position 100 (Lys-100) interacts with L-aspartate. Residues Arg-122, His-152, and Gln-155 each coordinate carbamoyl phosphate. L-aspartate is bound by residues Arg-186 and Arg-243. Carbamoyl phosphate contacts are provided by Gly-284 and Pro-285.

Belongs to the aspartate/ornithine carbamoyltransferase superfamily. ATCase family. As to quaternary structure, heterododecamer (2C3:3R2) of six catalytic PyrB chains organized as two trimers (C3), and six regulatory PyrI chains organized as three dimers (R2).

The enzyme catalyses carbamoyl phosphate + L-aspartate = N-carbamoyl-L-aspartate + phosphate + H(+). It functions in the pathway pyrimidine metabolism; UMP biosynthesis via de novo pathway; (S)-dihydroorotate from bicarbonate: step 2/3. Functionally, catalyzes the condensation of carbamoyl phosphate and aspartate to form carbamoyl aspartate and inorganic phosphate, the committed step in the de novo pyrimidine nucleotide biosynthesis pathway. The chain is Aspartate carbamoyltransferase catalytic subunit from Acinetobacter baumannii (strain SDF).